Reading from the N-terminus, the 516-residue chain is Nuclear speckle splicing regulatory protein 1 (516 aa).

Disordered stretches follow at residues 1-43 (MATS…GESL), 111-137 (ERKK…KFAD), 151-170 (KERQ…EAAL), and 188-494 (QTVG…SSAR). Phosphoserine is present on Ser33. Residues 100-176 (KYINQLLRAV…EAALDVKKQK (77 aa)) adopt a coiled-coil conformation. The segment covering 207–221 (TSSAAAERSPSPEST) has biased composition (low complexity). 2 stretches are compositionally biased toward basic and acidic residues: residues 222–239 (ANRR…DQVD) and 271–466 (ERER…KLVE). The stretch at 358 to 401 (KGERDRRDNSPKDRERDRKGERDRRDNSPKDRERETRDKSPKDR) forms a coiled coil.

The protein belongs to the NSRP1 family.

This Danio rerio (Zebrafish) protein is Nuclear speckle splicing regulatory protein 1 (nsrp1).